Reading from the N-terminus, the 188-residue chain is Early nodulin-like protein 5 (188 aa).

The N-terminal stretch at 1 to 24 (MDSSKKIIIVMFLVTFYMFSCVSS) is a signal peptide. Residues 25 to 128 (TEFEVGGENG…GQKMIVKVME (104 aa)) enclose the Phytocyanin domain. Cys-82 and Cys-116 are disulfide-bonded. The tract at residues 127–157 (METESSTESPPPSSSSSSSSSSSLPASTPKA) is disordered. Over residues 129–155 (TESSTESPPPSSSSSSSSSSSLPASTP) the composition is skewed to low complexity. Ser-170 carries the GPI-anchor amidated serine lipid modification. A propeptide spans 171-188 (SSGFVVSAVLIVSVFGLV) (removed in mature form).

It belongs to the early nodulin-like (ENODL) family. As to expression, mostly expressed in leaves and flowers, and, to a lower extent, in stems.

It is found in the cell membrane. In terms of biological role, may act as a carbohydrate transporter. Mainly required for reproductive functions. In Arabidopsis thaliana (Mouse-ear cress), this protein is Early nodulin-like protein 5.